Consider the following 407-residue polypeptide: UPF0761 membrane protein AZOSEA40600 (407 aa).

6 helical membrane-spanning segments follow: residues serine 29–phenylalanine 49, glycine 92–isoleucine 112, leucine 132–alanine 152, phenylalanine 174–valine 194, glycine 207–valine 227, and phenylalanine 239–glycine 259.

The protein belongs to the UPF0761 family.

It is found in the cell inner membrane. In Aromatoleum aromaticum (strain DSM 19018 / LMG 30748 / EbN1) (Azoarcus sp. (strain EbN1)), this protein is UPF0761 membrane protein AZOSEA40600.